The following is a 212-amino-acid chain: ATP phosphoribosyltransferase (212 aa).

The protein belongs to the ATP phosphoribosyltransferase family. Short subfamily. In terms of assembly, heteromultimer composed of HisG and HisZ subunits.

The protein localises to the cytoplasm. The catalysed reaction is 1-(5-phospho-beta-D-ribosyl)-ATP + diphosphate = 5-phospho-alpha-D-ribose 1-diphosphate + ATP. It participates in amino-acid biosynthesis; L-histidine biosynthesis; L-histidine from 5-phospho-alpha-D-ribose 1-diphosphate: step 1/9. Its function is as follows. Catalyzes the condensation of ATP and 5-phosphoribose 1-diphosphate to form N'-(5'-phosphoribosyl)-ATP (PR-ATP). Has a crucial role in the pathway because the rate of histidine biosynthesis seems to be controlled primarily by regulation of HisG enzymatic activity. The protein is ATP phosphoribosyltransferase of Clostridium botulinum (strain Okra / Type B1).